A 485-amino-acid chain; its full sequence is NADH-quinone oxidoreductase subunit N (485 aa).

Transmembrane regions (helical) follow at residues 8–28, 35–55, 71–91, 105–125, 127–147, 159–179, 203–223, 235–255, 271–291, 297–317, 326–346, 373–393, 408–430, and 455–475; these read LIAL…MLSI, FLNA…LWFV, GFAM…CTFA, FYLL…ANHL, SLFL…GYAF, YTIL…LVYA, LLAG…LVPF, PAPV…GVVM, VVLA…ALSQ, LLGY…IALQ, VGVY…VVSL, AAVM…LGFI, WWLV…RVAV, and IVVL…QPLI.

This sequence belongs to the complex I subunit 2 family. In terms of assembly, NDH-1 is composed of 13 different subunits. Subunits NuoA, H, J, K, L, M, N constitute the membrane sector of the complex.

The protein resides in the cell inner membrane. The enzyme catalyses a quinone + NADH + 5 H(+)(in) = a quinol + NAD(+) + 4 H(+)(out). In terms of biological role, NDH-1 shuttles electrons from NADH, via FMN and iron-sulfur (Fe-S) centers, to quinones in the respiratory chain. The immediate electron acceptor for the enzyme in this species is believed to be ubiquinone. Couples the redox reaction to proton translocation (for every two electrons transferred, four hydrogen ions are translocated across the cytoplasmic membrane), and thus conserves the redox energy in a proton gradient. In Shigella dysenteriae serotype 1 (strain Sd197), this protein is NADH-quinone oxidoreductase subunit N.